The following is a 381-amino-acid chain: EPS I polysaccharide export outer membrane protein EpsA (381 aa).

The first 23 residues, 1 to 23 (MFVSIPNIRKAVVSLSVVPLLAA), serve as a signal peptide directing secretion. Cysteine 24 is lipidated: N-palmitoyl cysteine. Cysteine 24 carries S-diacylglycerol cysteine lipidation.

It belongs to the BexD/CtrA/VexA family.

It localises to the cell outer membrane. Probably involved in polymerization and/or export of exopolysaccharide EPS I which functions as a virulence factor. The polypeptide is EPS I polysaccharide export outer membrane protein EpsA (epsA) (Ralstonia nicotianae (strain ATCC BAA-1114 / GMI1000) (Ralstonia solanacearum)).